We begin with the raw amino-acid sequence, 278 residues long: 2-succinyl-6-hydroxy-2,4-cyclohexadiene-1-carboxylate synthase (278 aa).

It belongs to the AB hydrolase superfamily. MenH family. As to quaternary structure, monomer.

It carries out the reaction 5-enolpyruvoyl-6-hydroxy-2-succinyl-cyclohex-3-ene-1-carboxylate = (1R,6R)-6-hydroxy-2-succinyl-cyclohexa-2,4-diene-1-carboxylate + pyruvate. Its pathway is quinol/quinone metabolism; 1,4-dihydroxy-2-naphthoate biosynthesis; 1,4-dihydroxy-2-naphthoate from chorismate: step 3/7. It participates in quinol/quinone metabolism; menaquinone biosynthesis. Catalyzes a proton abstraction reaction that results in 2,5-elimination of pyruvate from 2-succinyl-5-enolpyruvyl-6-hydroxy-3-cyclohexene-1-carboxylate (SEPHCHC) and the formation of 2-succinyl-6-hydroxy-2,4-cyclohexadiene-1-carboxylate (SHCHC). The protein is 2-succinyl-6-hydroxy-2,4-cyclohexadiene-1-carboxylate synthase of Photorhabdus laumondii subsp. laumondii (strain DSM 15139 / CIP 105565 / TT01) (Photorhabdus luminescens subsp. laumondii).